A 115-amino-acid chain; its full sequence is Nitrogenase-stabilizing/protective protein NifW (115 aa).

Belongs to the NifW family. Homotrimer; associates with NifD.

Functionally, may protect the nitrogenase Fe-Mo protein from oxidative damage. The sequence is that of Nitrogenase-stabilizing/protective protein NifW from Methylobacterium sp. (strain 4-46).